Here is a 420-residue protein sequence, read N- to C-terminus: Probable glucuronosyltransferase Os04g0398600 (420 aa).

Topologically, residues 1 to 4 (MGSR) are cytoplasmic. The helical; Signal-anchor for type II membrane protein transmembrane segment at 5–25 (TVGWWLLAAAVVLAAAAADSG) threads the bilayer. Residues 26 to 420 (EAERAAEQHS…AGPVGDLKAW (395 aa)) lie on the Lumenal side of the membrane. N-linked (GlcNAc...) asparagine glycans are attached at residues N147 and N408.

This sequence belongs to the glycosyltransferase 47 family.

It is found in the golgi apparatus membrane. Involved in the synthesis of glucuronoxylan hemicellulose in secondary cell walls. This Oryza sativa subsp. japonica (Rice) protein is Probable glucuronosyltransferase Os04g0398600.